The primary structure comprises 496 residues: Genome polyprotein (496 aa).

At 1–447 (SRCTHLENRD…HTVLGGAFNS (447 aa)) the chain is on the extracellular side. 6 cysteine pairs are disulfide-bonded: Cys3-Cys30, Cys60-Cys116, Cys60-Cys121, Cys74-Cys105, Cys92-Cys116, and Cys92-Cys121. A fusion peptide region spans residues 98 to 111 (DRGWGNHCGLFGKG). Asn154 carries an N-linked (GlcNAc...) asparagine; by host glycan. Cystine bridges form between Cys186–Cys290 and Cys307–Cys338. A helical membrane pass occupies residues 448 to 468 (IFGGVGFLPKLLMGVALAWLG). Over 469–479 (LNTRNPTMSMS) the chain is Cytoplasmic. The chain crosses the membrane as a helical span at residues 480–496 (FLLAGGLVLAMTLGVGA).

As to quaternary structure, homodimer; in the endoplasmic reticulum and Golgi. In terms of processing, N-glycosylated.

Its subcellular location is the virion membrane. It localises to the host endoplasmic reticulum membrane. In terms of biological role, binds to host cell surface receptor and mediates fusion between viral and cellular membranes. Envelope protein is synthesized in the endoplasmic reticulum in the form of heterodimer with protein prM. They play a role in virion budding in the ER, and the newly formed immature particle is covered with 60 spikes composed of heterodimer between precursor prM and envelope protein E. The virion is transported to the Golgi apparatus where the low pH causes dissociation of PrM-E heterodimers and formation of E homodimers. prM-E cleavage is ineficient, and many virions are only partially matured. These uncleaved prM would play a role in immune evasion. The protein is Genome polyprotein of Louping ill virus (strain Negishi 3248/49/P10) (Li).